Reading from the N-terminus, the 617-residue chain is Elongation factor 4 (617 aa).

The 182-residue stretch at 17-198 folds into the tr-type G domain; it reads AIIRNFCIIA…KIVRDLPAPV (182 aa). GTP is bound by residues 29-34 and 145-148; these read DHGKST and NKID.

It belongs to the TRAFAC class translation factor GTPase superfamily. Classic translation factor GTPase family. LepA subfamily.

It is found in the cell membrane. The enzyme catalyses GTP + H2O = GDP + phosphate + H(+). Functionally, required for accurate and efficient protein synthesis under certain stress conditions. May act as a fidelity factor of the translation reaction, by catalyzing a one-codon backward translocation of tRNAs on improperly translocated ribosomes. Back-translocation proceeds from a post-translocation (POST) complex to a pre-translocation (PRE) complex, thus giving elongation factor G a second chance to translocate the tRNAs correctly. Binds to ribosomes in a GTP-dependent manner. The polypeptide is Elongation factor 4 (Arthrobacter sp. (strain FB24)).